The following is a 470-amino-acid chain: Cysteine--tRNA ligase (470 aa).

Cysteine 27 contributes to the Zn(2+) binding site. The short motif at 29–39 (PTVYNHIHIGN) is the 'HIGH' region element. Zn(2+) contacts are provided by cysteine 207, histidine 232, and glutamate 236. The 'KMSKS' region signature appears at 265–269 (KMAKS). An ATP-binding site is contributed by lysine 268.

Belongs to the class-I aminoacyl-tRNA synthetase family. As to quaternary structure, monomer. Requires Zn(2+) as cofactor.

It localises to the cytoplasm. It catalyses the reaction tRNA(Cys) + L-cysteine + ATP = L-cysteinyl-tRNA(Cys) + AMP + diphosphate. The polypeptide is Cysteine--tRNA ligase (Rubrobacter xylanophilus (strain DSM 9941 / JCM 11954 / NBRC 16129 / PRD-1)).